We begin with the raw amino-acid sequence, 548 residues long: MAAKDVKFGNDARVKMLKGVNVLADAVKVTLGPKGRNVILDKSFGAPTITKDGVSVAREIELEDKFENMGAQMVKEVASKANDAAGDGTTTATVLAQAIVNEGLKAVAAGMNPMDLKRGIDKAVSAVVSELKNLSKPCETSKEIEQVGTISANSDSIVGQLISQAMEKVGKEGVITVEDGTGLEDELDVVEGMQFDRGYLSPYFINKPETATVELDNPYLLLVDKKISNIRELLPVLEGVAKAGKPLLIIAEDVEGEALATLVVNTMRGIVKVAAVKAPGFGDRRKAMLQDIAILTAGTVISEEIGMELEKATLEDLGQAKRVVINKDNTTIIDGIGDEAQIKGRVAQIRQQIEESTSDYDKEKLQERVAKLAGGVAVIKVGAATEVEMKEKKDRVDDALHATRAAVEEGIVAGGGVALVRAAAKVAASLKGDNEEQNVGIKLALRAMEAPLRQIVTNAGEEASVVASAVKNGEGNFGYNAGTEQYGDMIEMGILDPTKVTRSALQFAASVAGLMITTECMVTDLPKDDKADLGAAGMGGMGGMGGMM.

ATP-binding positions include 30–33, lysine 51, 87–91, glycine 415, and aspartate 496; these read TLGP and DGTTT.

This sequence belongs to the chaperonin (HSP60) family. Forms a cylinder of 14 subunits composed of two heptameric rings stacked back-to-back. Interacts with the co-chaperonin GroES.

It is found in the cytoplasm. It catalyses the reaction ATP + H2O + a folded polypeptide = ADP + phosphate + an unfolded polypeptide.. Functionally, together with its co-chaperonin GroES, plays an essential role in assisting protein folding. The GroEL-GroES system forms a nano-cage that allows encapsulation of the non-native substrate proteins and provides a physical environment optimized to promote and accelerate protein folding. The polypeptide is Chaperonin GroEL (Haemophilus influenzae (strain PittGG)).